A 202-amino-acid polypeptide reads, in one-letter code: Protein-methionine-sulfoxide reductase heme-binding subunit MsrQ (202 aa).

6 consecutive transmembrane segments (helical) span residues 8–28 (LAVF…AWIF), 42–62 (LGLG…LQKL), 75–95 (LGLW…VFIL), 110–130 (PYII…ITSN), 147–167 (LVYL…RADL), and 169–189 (EWTL…PSIA).

Belongs to the MsrQ family. As to quaternary structure, heterodimer of a catalytic subunit (MsrP) and a heme-binding subunit (MsrQ). FMN serves as cofactor. The cofactor is heme b.

The protein resides in the cell inner membrane. Part of the MsrPQ system that repairs oxidized periplasmic proteins containing methionine sulfoxide residues (Met-O), using respiratory chain electrons. Thus protects these proteins from oxidative-stress damage caused by reactive species of oxygen and chlorine generated by the host defense mechanisms. MsrPQ is essential for the maintenance of envelope integrity under bleach stress, rescuing a wide series of structurally unrelated periplasmic proteins from methionine oxidation. MsrQ provides electrons for reduction to the reductase catalytic subunit MsrP, using the quinone pool of the respiratory chain. The sequence is that of Protein-methionine-sulfoxide reductase heme-binding subunit MsrQ from Pseudomonas aeruginosa (strain UCBPP-PA14).